The primary structure comprises 684 residues: Phenoloxidase 2 (684 aa).

Positions Met-1–Arg-51 are cleaved as a propeptide — removed by PPAF1. 2 N-linked (GlcNAc...) asparagine glycosylation sites follow: Asn-81 and Asn-91. Positions 209, 213, and 238 each coordinate Cu cation. Asn-330 carries an N-linked (GlcNAc...) asparagine glycan. Glu-350 serves as the catalytic Proton acceptor. His-365, His-369, and His-405 together coordinate Cu cation. Asn-416, Asn-487, Asn-491, and Asn-546 each carry an N-linked (GlcNAc...) asparagine glycan. 2 cysteine pairs are disulfide-bonded: Cys-581-Cys-623 and Cys-583-Cys-630.

The protein belongs to the tyrosinase family. As to quaternary structure, dimer. Might form a homodimer or a heterodimer with PPO1. Might interact with PPAF2 (via CLIP domain); the interaction might be required for PPO2 activity. Requires Cu(2+) as cofactor. Post-translationally, precursor cleaved by PPAF1. In terms of tissue distribution, hemocytes.

Its subcellular location is the secreted. In terms of biological role, this is a copper-containing oxidase that functions in the formation of pigments such as melanins and other polyphenolic compounds. Catalyzes the oxidation of o-diphenols (N-acetyldopamine, 4-methylcatechol and dopamine). Cannot oxidize monophenols and p-phenols (L-tyrosine, tyramine, gentisic acid and hydroquinone). Binds to the surface of hemocytes and is involved in hemocyte melanization. Activation of the enzyme in response to bacterial lipopolysaccharides (LPS) suggests it may play a role in innate immunity. The sequence is that of Phenoloxidase 2 from Holotrichia diomphalia (Korean black chafer).